Reading from the N-terminus, the 371-residue chain is Cytochrome b (371 aa).

Transmembrane regions (helical) follow at residues 25–45, 69–90, 105–125, and 170–190; these read FGSMLLACSSMQVLTGFFLAV, WMMQNLHAIGASMFFICIYIHI, WLSGTTLLIMLMATAFFGYVL, and FFALHFILPFGIISLSSLHIM. H75 and H89 together coordinate heme b. 2 residues coordinate heme b: H174 and H188. Residue H193 participates in a ubiquinone binding. Transmembrane regions (helical) follow at residues 218–238, 280–300, 312–332, and 339–358; these read YKDLLMLSLMVLMLLMTVSFL, LWGALALAMSITILLTVPFTH, IMQLMFWTLVATFMVITWAAT, and FTMISQIASTIYFLFLIMNP.

Belongs to the cytochrome b family. In terms of assembly, the cytochrome bc1 complex contains 3 respiratory subunits (MT-CYB, CYC1 and UQCRFS1), 2 core proteins (UQCRC1 and UQCRC2) and probably 6 low-molecular weight proteins. Requires heme b as cofactor.

The protein resides in the mitochondrion inner membrane. Functionally, component of the ubiquinol-cytochrome c reductase complex (complex III or cytochrome b-c1 complex) that is part of the mitochondrial respiratory chain. The b-c1 complex mediates electron transfer from ubiquinol to cytochrome c. Contributes to the generation of a proton gradient across the mitochondrial membrane that is then used for ATP synthesis. This is Cytochrome b (MT-CYB) from Eryx miliaris nogaiorum (Black sand boa).